Consider the following 835-residue polypeptide: Protein translocase subunit SecA (835 aa).

Residues Gln85, 103-107 (GEGKT), and Asp492 each bind ATP. Zn(2+)-binding residues include Cys819, Cys821, Cys830, and Cys831.

It belongs to the SecA family. As to quaternary structure, monomer and homodimer. Part of the essential Sec protein translocation apparatus which comprises SecA, SecYEG and auxiliary proteins SecDF. Other proteins may also be involved. Zn(2+) is required as a cofactor.

Its subcellular location is the cell membrane. The protein resides in the cytoplasm. It carries out the reaction ATP + H2O + cellular proteinSide 1 = ADP + phosphate + cellular proteinSide 2.. Part of the Sec protein translocase complex. Interacts with the SecYEG preprotein conducting channel. Has a central role in coupling the hydrolysis of ATP to the transfer of proteins into and across the cell membrane, serving as an ATP-driven molecular motor driving the stepwise translocation of polypeptide chains across the membrane. The protein is Protein translocase subunit SecA of Clostridium botulinum (strain Kyoto / Type A2).